Here is a 627-residue protein sequence, read N- to C-terminus: MACPF domain-containing protein At1g14780 (627 aa).

The MACPF domain occupies 1 to 339; sequence MSRDGGDVIE…PPLMDLQYFL (339 aa).

This sequence belongs to the complement C6/C7/C8/C9 (TC 1.C.39) family.

In terms of biological role, negatively controls the salicylic acid (SA)-mediated pathway of programmed cell death in plant immunity. The polypeptide is MACPF domain-containing protein At1g14780 (Arabidopsis thaliana (Mouse-ear cress)).